Here is an 820-residue protein sequence, read N- to C-terminus: Leucine--tRNA ligase (820 aa).

The short motif at 40–51 (PYPSGAGLHVGH) is the 'HIGH' region element. Positions 601 to 605 (KMSKS) match the 'KMSKS' region motif. Residue Lys604 coordinates ATP.

The protein belongs to the class-I aminoacyl-tRNA synthetase family.

It is found in the cytoplasm. The enzyme catalyses tRNA(Leu) + L-leucine + ATP = L-leucyl-tRNA(Leu) + AMP + diphosphate. This chain is Leucine--tRNA ligase, found in Chlamydia abortus (strain DSM 27085 / S26/3) (Chlamydophila abortus).